The following is a 135-amino-acid chain: Small ribosomal subunit protein uS8 (135 aa).

It belongs to the universal ribosomal protein uS8 family. In terms of assembly, part of the 30S ribosomal subunit. Contacts proteins S5 and S12.

One of the primary rRNA binding proteins, it binds directly to 16S rRNA central domain where it helps coordinate assembly of the platform of the 30S subunit. This chain is Small ribosomal subunit protein uS8, found in Salinispora arenicola (strain CNS-205).